A 279-amino-acid polypeptide reads, in one-letter code: NADPH-dependent 7-cyano-7-deazaguanine reductase (279 aa).

86–88 (IES) serves as a coordination point for substrate. 88-89 (SK) is a binding site for NADPH. The active-site Thioimide intermediate is cysteine 187. Aspartate 194 (proton donor) is an active-site residue. A substrate-binding site is contributed by 226–227 (HE). 255–256 (RG) contacts NADPH.

It belongs to the GTP cyclohydrolase I family. QueF type 2 subfamily. Homodimer.

It is found in the cytoplasm. It catalyses the reaction 7-aminomethyl-7-carbaguanine + 2 NADP(+) = 7-cyano-7-deazaguanine + 2 NADPH + 3 H(+). The protein operates within tRNA modification; tRNA-queuosine biosynthesis. Catalyzes the NADPH-dependent reduction of 7-cyano-7-deazaguanine (preQ0) to 7-aminomethyl-7-deazaguanine (preQ1). This is NADPH-dependent 7-cyano-7-deazaguanine reductase from Pasteurella multocida (strain Pm70).